A 228-amino-acid polypeptide reads, in one-letter code: Secreted LysM effector ECP6 (228 aa).

An N-terminal signal peptide occupies residues 1–18 (MQSMILFAAALMGAAVNG). Intrachain disulfides connect cysteine 36–cysteine 90, cysteine 64–cysteine 98, cysteine 109–cysteine 163, and cysteine 168–cysteine 220. The LysM 1 domain occupies 42-86 (IKYTVVKGDTLTSIAKKFKSGICNIVSVNKLANPNLIELGATLII). Residues threonine 51, threonine 53, asparagine 76, and isoleucine 78 each coordinate chitin. N-linked (GlcNAc...) asparagine glycosylation is found at asparagine 89, asparagine 95, asparagine 127, and asparagine 133. 2 LysM domains span residues 115-160 (GSYT…IITV) and 172-216 (GTYN…QIIL). Positions 179, 181, 183, 205, 206, and 208 each coordinate chitin. Asparagine 222 carries N-linked (GlcNAc...) asparagine glycosylation.

The protein belongs to the secreted LysM effector family. In terms of assembly, forms homodimers.

It localises to the secreted. In terms of biological role, secreted effector that enables the plant pathogenic fungus to manipulate host defenses for successful infection. Binds chitine, but not to any other glycan, including the N-linked glycan chitobiose. Outcompetes host immune receptor for chitin binding through intrachain LysM dimerization. During infection, sequesters chitin oligosaccharides that are released from the cell walls of invading hyphae to prevent elicitation of host immunity. This is Secreted LysM effector ECP6 from Passalora fulva (Tomato leaf mold).